Here is a 545-residue protein sequence, read N- to C-terminus: uncharacterized protein (545 aa).

Over residues methionine 1 to arginine 10 the composition is skewed to basic residues. Residues methionine 1–proline 25 are disordered. 2 WD repeats span residues alanine 417 to methionine 456 and glycine 460 to serine 501.

This is an uncharacterized protein from Caenorhabditis elegans.